The following is a 258-amino-acid chain: Global transcriptional regulator CodY (258 aa).

A GAF domain region spans residues 1 to 156; the sequence is MSSLLSKTRR…SATIVGMEML (156 aa). Residues 204 to 223 constitute a DNA-binding region (H-T-H motif); that stretch reads ASKIADKVGITRSVIVNALR.

This sequence belongs to the CodY family.

Its subcellular location is the cytoplasm. DNA-binding global transcriptional regulator which is involved in the adaptive response to starvation and acts by directly or indirectly controlling the expression of numerous genes in response to nutrient availability. During rapid exponential growth, CodY is highly active and represses genes whose products allow adaptation to nutrient depletion. The protein is Global transcriptional regulator CodY of Clostridium botulinum (strain Alaska E43 / Type E3).